Consider the following 337-residue polypeptide: Sorting nexin-15 (337 aa).

In terms of domain architecture, PX spans 1–130; sequence MSRQAKDDFL…EFFRGGEVTR (130 aa). A 1,2-diacyl-sn-glycero-3-phospho-(1D-myo-inositol-3-phosphate) contacts are provided by Arg51, Ser53, Arg87, and Arg96. Arg105 bears the Omega-N-methylarginine mark. The disordered stretch occupies residues 133-156; sequence EVSRDLRILPPPLIPTPPPDEARL. The segment covering 141–151 has biased composition (pro residues); it reads LPPPLIPTPPP. A phosphoserine mark is found at Ser201 and Ser227. The disordered stretch occupies residues 244–270; sequence LDQEPWEPGGQEEEEAEDGEPAPAYLG. Residues 253 to 263 are compositionally biased toward acidic residues; the sequence is GQEEEEAEDGE. The 73-residue stretch at 265–337 folds into the MIT domain; sequence APAYLGQATE…RAEMLHTHLP (73 aa).

It belongs to the sorting nexin family. In terms of assembly, homodimer. Interacts with SNX1, SNX2 and SNX4.

The protein localises to the cytoplasm. Its subcellular location is the membrane. It localises to the cytoplasmic vesicle membrane. Its function is as follows. May be involved in several stages of intracellular trafficking. Overexpression of SNX15 disrupts the normal trafficking of proteins from the plasma membrane to recycling endosomes or the TGN. This Mus musculus (Mouse) protein is Sorting nexin-15 (Snx15).